Here is a 475-residue protein sequence, read N- to C-terminus: Ribulose bisphosphate carboxylase large chain (475 aa).

Residues 1–2 constitute a propeptide that is removed on maturation; sequence MS. P3 carries the post-translational modification N-acetylproline. Position 14 is an N6,N6,N6-trimethyllysine (K14). Positions 123 and 173 each coordinate substrate. Catalysis depends on K175, which acts as the Proton acceptor. Residue K177 participates in substrate binding. Mg(2+) is bound by residues K201, D203, and E204. N6-carboxylysine is present on K201. The active-site Proton acceptor is H294. Substrate contacts are provided by R295, H327, and S379.

Belongs to the RuBisCO large chain family. Type I subfamily. In terms of assembly, heterohexadecamer of 8 large chains and 8 small chains; disulfide-linked. The disulfide link is formed within the large subunit homodimers. It depends on Mg(2+) as a cofactor. In terms of processing, the disulfide bond which can form in the large chain dimeric partners within the hexadecamer appears to be associated with oxidative stress and protein turnover.

The protein resides in the plastid. It is found in the chloroplast. The catalysed reaction is 2 (2R)-3-phosphoglycerate + 2 H(+) = D-ribulose 1,5-bisphosphate + CO2 + H2O. The enzyme catalyses D-ribulose 1,5-bisphosphate + O2 = 2-phosphoglycolate + (2R)-3-phosphoglycerate + 2 H(+). Its function is as follows. RuBisCO catalyzes two reactions: the carboxylation of D-ribulose 1,5-bisphosphate, the primary event in carbon dioxide fixation, as well as the oxidative fragmentation of the pentose substrate in the photorespiration process. Both reactions occur simultaneously and in competition at the same active site. In Notothixos subaureus (Golden mistletoe), this protein is Ribulose bisphosphate carboxylase large chain.